Reading from the N-terminus, the 623-residue chain is Protein FAM234B (623 aa).

Positions 1–82 (MATVLSRALK…TSERAPEGYP (82 aa)) are disordered. The helical transmembrane segment at 104-124 (AVFLLTVVISMILVLVCAFLI) threads the bilayer.

This sequence belongs to the FAM234 family.

The protein resides in the membrane. It localises to the golgi outpost. The protein localises to the cytoplasm. Its subcellular location is the cytoskeleton. It is found in the microtubule organizing center. The protein is Protein FAM234B (FAM234B) of Gallus gallus (Chicken).